Consider the following 133-residue polypeptide: Holo-[acyl-carrier-protein] synthase (133 aa).

Mg(2+)-binding residues include Asp8 and Glu57.

The protein belongs to the P-Pant transferase superfamily. AcpS family. Requires Mg(2+) as cofactor.

The protein localises to the cytoplasm. It catalyses the reaction apo-[ACP] + CoA = holo-[ACP] + adenosine 3',5'-bisphosphate + H(+). In terms of biological role, transfers the 4'-phosphopantetheine moiety from coenzyme A to a Ser of acyl-carrier-protein. In Parvibaculum lavamentivorans (strain DS-1 / DSM 13023 / NCIMB 13966), this protein is Holo-[acyl-carrier-protein] synthase.